A 205-amino-acid chain; its full sequence is FMN reductase (NADH) RutF (205 aa).

The interval 171-205 (PRAPRSGSAPAEPARAARALGARPAEGPALALRSA) is disordered.

This sequence belongs to the non-flavoprotein flavin reductase family. RutF subfamily.

The catalysed reaction is FMNH2 + NAD(+) = FMN + NADH + 2 H(+). In terms of biological role, catalyzes the reduction of FMN to FMNH2 which is used to reduce pyrimidine by RutA via the Rut pathway. The chain is FMN reductase (NADH) RutF from Methylorubrum extorquens (strain DSM 6343 / CIP 106787 / DM4) (Methylobacterium extorquens).